The sequence spans 145 residues: Ribonuclease H (145 aa).

One can recognise an RNase H type-1 domain in the interval 1–141 (MQEVTIYSDG…ADALANRGVA (141 aa)). Mg(2+)-binding residues include Asp9, Glu47, Asp69, and Asp133.

This sequence belongs to the RNase H family. Monomer. The cofactor is Mg(2+).

It is found in the cytoplasm. It carries out the reaction Endonucleolytic cleavage to 5'-phosphomonoester.. Its function is as follows. Endonuclease that specifically degrades the RNA of RNA-DNA hybrids. The sequence is that of Ribonuclease H from Cupriavidus metallidurans (strain ATCC 43123 / DSM 2839 / NBRC 102507 / CH34) (Ralstonia metallidurans).